The sequence spans 45 residues: Osteocalcin 1 (45 aa).

Residues 1–41 (AAGQLSLTQLESLREVCELNLACEHMMDTEGIIAAYTAYYG) enclose the Gla domain. Residues Glu-11, Glu-15, Glu-18, and Glu-24 each coordinate Ca(2+). 3 positions are modified to 4-carboxyglutamate: Glu-11, Glu-15, and Glu-18. Cysteines 17 and 23 form a disulfide.

The protein belongs to the osteocalcin/matrix Gla protein family. Post-translationally, gamma-carboxyglutamate residues are formed by vitamin K dependent carboxylation by GGCX. These residues are essential for the binding of calcium.

Its subcellular location is the secreted. In terms of biological role, the carboxylated form is one of the main organic components of the bone matrix, which constitutes 1-2% of the total bone protein. The carboxylated form binds strongly to apatite and calcium. This chain is Osteocalcin 1, found in Diplodus sargus (White seabream).